Consider the following 187-residue polypeptide: Large ribosomal subunit protein uL6 (187 aa).

This sequence belongs to the universal ribosomal protein uL6 family. In terms of assembly, part of the 50S ribosomal subunit.

Functionally, this protein binds to the 23S rRNA, and is important in its secondary structure. It is located near the subunit interface in the base of the L7/L12 stalk, and near the tRNA binding site of the peptidyltransferase center. The polypeptide is Large ribosomal subunit protein uL6 (Chloroflexus aggregans (strain MD-66 / DSM 9485)).